Consider the following 467-residue polypeptide: UBX domain-containing protein 7 (467 aa).

Residue alanine 2 is modified to N-acetylalanine. The 53-residue stretch at 2–54 (AAHGGSAASSALKGLIQQFTAITGASESVGKHMLEACNNNLEMAVTMFLDGGG) folds into the UBA domain. Positions 57–77 (EEPSTSSASVSTVRPHTEEEV) are disordered. Residues 59 to 70 (PSTSSASVSTVR) show a composition bias toward polar residues. Glycyl lysine isopeptide (Lys-Gly) (interchain with G-Cter in SUMO2) cross-links involve residues lysine 84 and lysine 112. The disordered stretch occupies residues 240-260 (GQLDGLSSSPPKKCARSESLI). Residues serine 256, serine 258, serine 263, and serine 266 each carry the phosphoserine modification. A ubiquitin-interacting motif (UIM) repeat occupies 263–282 (SEDSQLEAAIRASLQETHFD). The disordered stretch occupies residues 281–364 (FDSAQAKQDS…TATNHQGLPS (84 aa)). A compositionally biased stretch (basic and acidic residues) spans 330 to 344 (HKDLGHRKEENRRPL). At serine 373 the chain carries Phosphoserine. Positions 386–463 (VNGPKAQLML…GLCPQETVFV (78 aa)) constitute a UBX domain.

As to quaternary structure, interacts with neddylated CUL2, ubiquitinated HIF1A, and VCP/p97.

The protein localises to the nucleus. Ubiquitin-binding adapter that links a subset of NEDD8-associated cullin ring ligases (CRLs) to the segregase VCP/p97, to regulate turnover of their ubiquitination substrates. The sequence is that of UBX domain-containing protein 7 (Ubxn7) from Mus musculus (Mouse).